The chain runs to 377 residues: Chaperone protein DnaJ (377 aa).

Residues 5–70 (DYYELLGLQK…EKKAKYDQFG (66 aa)) form the J domain. A CR-type zinc finger spans residues 137 to 219 (GVEKEISVTR…CRGKGSVRKT (83 aa)). The Zn(2+) site is built by Cys150, Cys153, Cys167, Cys170, Cys193, Cys196, Cys207, and Cys210. CXXCXGXG motif repeat units lie at residues 150 to 157 (CEHCHGSG), 167 to 174 (CPTCSGSG), 193 to 200 (CDTCRGTG), and 207 to 214 (CSECRGKG).

Belongs to the DnaJ family. In terms of assembly, homodimer. Zn(2+) is required as a cofactor.

The protein resides in the cytoplasm. In terms of biological role, participates actively in the response to hyperosmotic and heat shock by preventing the aggregation of stress-denatured proteins and by disaggregating proteins, also in an autonomous, DnaK-independent fashion. Unfolded proteins bind initially to DnaJ; upon interaction with the DnaJ-bound protein, DnaK hydrolyzes its bound ATP, resulting in the formation of a stable complex. GrpE releases ADP from DnaK; ATP binding to DnaK triggers the release of the substrate protein, thus completing the reaction cycle. Several rounds of ATP-dependent interactions between DnaJ, DnaK and GrpE are required for fully efficient folding. Also involved, together with DnaK and GrpE, in the DNA replication of plasmids through activation of initiation proteins. This Clostridium beijerinckii (strain ATCC 51743 / NCIMB 8052) (Clostridium acetobutylicum) protein is Chaperone protein DnaJ.